The sequence spans 481 residues: Aspartyl/glutamyl-tRNA(Asn/Gln) amidotransferase subunit B (481 aa).

It belongs to the GatB/GatE family. GatB subfamily. As to quaternary structure, heterotrimer of A, B and C subunits.

The enzyme catalyses L-glutamyl-tRNA(Gln) + L-glutamine + ATP + H2O = L-glutaminyl-tRNA(Gln) + L-glutamate + ADP + phosphate + H(+). It catalyses the reaction L-aspartyl-tRNA(Asn) + L-glutamine + ATP + H2O = L-asparaginyl-tRNA(Asn) + L-glutamate + ADP + phosphate + 2 H(+). In terms of biological role, allows the formation of correctly charged Asn-tRNA(Asn) or Gln-tRNA(Gln) through the transamidation of misacylated Asp-tRNA(Asn) or Glu-tRNA(Gln) in organisms which lack either or both of asparaginyl-tRNA or glutaminyl-tRNA synthetases. The reaction takes place in the presence of glutamine and ATP through an activated phospho-Asp-tRNA(Asn) or phospho-Glu-tRNA(Gln). The protein is Aspartyl/glutamyl-tRNA(Asn/Gln) amidotransferase subunit B of Ectopseudomonas mendocina (strain ymp) (Pseudomonas mendocina).